The chain runs to 1224 residues: uncharacterized protein (1224 aa).

Disordered regions lie at residues 1–67 (MNQD…SSSI), 111–151 (QQSH…PPPL), 193–270 (QTEL…DPNI), 316–416 (DYNN…TVKK), 430–957 (SDSG…QEEK), and 1078–1167 (SFLP…TSHV). Positions 10–48 (SFHSNNNSNSNHHHSYNNSINSGSSSSGSNNSSNNNSFN) are enriched in low complexity. Over residues 49-58 (DEIEGGEIQE) the composition is skewed to acidic residues. Composition is skewed to low complexity over residues 126–140 (SSSS…SSSS), 193–212 (QTEL…SSPP), and 228–241 (SAPT…SVSS). The segment covering 242–255 (LTQPQKPKSVQYSQ) has biased composition (polar residues). A compositionally biased stretch (basic and acidic residues) spans 260-270 (EIREEKVDPNI). The span at 316–338 (DYNNSNSNNSNNNNNNNNSITEN) shows a compositional bias: low complexity. The span at 341–353 (DKMINNQPSSTNS) shows a compositional bias: polar residues. Composition is skewed to low complexity over residues 379–413 (TTTT…TTPT) and 430–450 (SDSG…TSTP). Basic and acidic residues-rich tracts occupy residues 451 to 585 (KSKD…DKKK) and 630 to 646 (EIDK…KVES). Positions 662-719 (TTTTTTSTSSSSSLPSLSSSSSSLPLPSSSSSSSSSSSSSSSSSSSSSSSSSSSTTST) are enriched in low complexity. The segment covering 727 to 750 (PPPPPQQPPPPPPQQPPPPPPPIN) has biased composition (pro residues). The segment covering 755 to 892 (SEHDKKIIEK…SDRDRDRKDS (138 aa)) has biased composition (basic and acidic residues). Residues 893-933 (NSNNNSNNNNNNNNNNNNNNNNNNNNKKDNNNNNNNNNNNN) are compositionally biased toward low complexity. Basic and acidic residues predominate over residues 948 to 957 (TPKKTKQEEK). Residues 950–991 (KKTKQEEKLIRSQIDQIKEDAKDLKKLAKELQSKNQNECLEM) adopt a coiled-coil conformation. Composition is skewed to low complexity over residues 1078–1108 (SFLP…TAPL) and 1114–1165 (NPSE…PNTS).

This is an uncharacterized protein from Dictyostelium discoideum (Social amoeba).